A 90-amino-acid polypeptide reads, in one-letter code: Putative F-box protein At5g16285 (90 aa).

The F-box domain occupies 1–46 (MRIESLLQHDVVERILERLAVNSLPRFKAVSKQWKSTIESQFFQGK).

This chain is Putative F-box protein At5g16285, found in Arabidopsis thaliana (Mouse-ear cress).